The primary structure comprises 98 residues: Integration host factor subunit beta (98 aa).

The protein belongs to the bacterial histone-like protein family. In terms of assembly, heterodimer of an alpha and a beta chain.

Its function is as follows. This protein is one of the two subunits of integration host factor, a specific DNA-binding protein that functions in genetic recombination as well as in transcriptional and translational control. This is Integration host factor subunit beta from Gluconacetobacter diazotrophicus (strain ATCC 49037 / DSM 5601 / CCUG 37298 / CIP 103539 / LMG 7603 / PAl5).